A 174-amino-acid chain; its full sequence is Large ribosomal subunit protein uL13 (174 aa).

2 disordered regions span residues 1-22 (MAFP…AKSP) and 153-174 (GETH…LEVK).

The protein belongs to the universal ribosomal protein uL13 family. Part of the 50S ribosomal subunit. Contacts proteins L3 and L20.

In terms of biological role, this protein is one of the early assembly proteins of the 50S ribosomal subunit. Binds to the 23S rRNA. The polypeptide is Large ribosomal subunit protein uL13 (rplM) (Deinococcus radiodurans (strain ATCC 13939 / DSM 20539 / JCM 16871 / CCUG 27074 / LMG 4051 / NBRC 15346 / NCIMB 9279 / VKM B-1422 / R1)).